A 196-amino-acid polypeptide reads, in one-letter code: MDDTLFQLKFTAKQLEKLAKKAEKDSNTEQAKVKKALQQKNVEVARVYAENAIRKKNEGLNWLRMASRVDAVASKVQTAVTMKGVTKNMAQVTKALDKALSSMDLQKVSAVMDKFDQQVQNLDVHTSVMEDSMSSAMTLTTPQEQVDNLIVQIAEENGLEVMDQLNQLPQGASSVGESSTRTQEDQLSRRLASLRN.

Residues 5-41 (LFQLKFTAKQLEKLAKKAEKDSNTEQAKVKKALQQKN) are a coiled coil. Residues 170–181 (QGASSVGESSTR) are compositionally biased toward polar residues. A disordered region spans residues 170–196 (QGASSVGESSTRTQEDQLSRRLASLRN). Residues 185–195 (DQLSRRLASLR) carry the MIT-interacting motif motif.

It belongs to the SNF7 family. As to quaternary structure, probable peripherally associated component of the endosomal sorting required for transport complex III (ESCRT-III).

It localises to the cytoplasm. It is found in the endosome membrane. Functionally, probable peripherally associated component of the endosomal sorting required for transport complex III (ESCRT-III) which is involved in multivesicular bodies (MVBs) formation and sorting of endosomal cargo proteins into MVBs. MVBs contain intraluminal vesicles (ILVs) that are generated by invagination and scission from the limiting membrane of the endosome and mostly are delivered to lysosomes enabling degradation of membrane proteins, such as stimulated growth factor receptors, lysosomal enzymes and lipids. The sequence is that of Charged multivesicular body protein 1a (chmp1a) from Xenopus laevis (African clawed frog).